A 771-amino-acid polypeptide reads, in one-letter code: GPI mannosyltransferase 3 (771 aa).

The interval 1–47 is disordered; sequence MSSSRRRKSFTSSSSSSSPSFHSPPPTSRLRPRSPPSSNTKTSPTST. Low complexity-rich tracts occupy residues 10 to 21 and 36 to 47; these read FTSSSSSSSPSF and PSSNTKTSPTST. The next 7 helical transmembrane spans lie at 49-69, 251-271, 285-305, 341-361, 378-398, 410-430, and 441-461; these read PLATNILLSLIAFRLVNAFTV, LSLAAVACILRPTNILIWMGL, AILVREVLLCGCAVLGLSCVV, YVSQGFPLLLTTALPFALVGL, SLVQAQLALICVIMPFVLSLV, LPSLHILSAPPLVDYFLPAVI, and LTLIFLLLVNIVIALYTTIYH. The tract at residues 575–594 is disordered; it reads SYLSAQPRPQHPSTTSTNDA.

It belongs to the glycosyltransferase 22 family. PIGB subfamily.

The protein resides in the endoplasmic reticulum membrane. The protein operates within glycolipid biosynthesis; glycosylphosphatidylinositol-anchor biosynthesis. In terms of biological role, mannosyltransferase involved in glycosylphosphatidylinositol-anchor biosynthesis. Transfers the third mannose to Man2-GlcN-acyl-PI during GPI precursor assembly. This is GPI mannosyltransferase 3 (gpi10) from Aspergillus fumigatus (strain ATCC MYA-4609 / CBS 101355 / FGSC A1100 / Af293) (Neosartorya fumigata).